The chain runs to 591 residues: CDK5RAP3 protein homolog (591 aa).

Residues 232–250 (RAGAPSSAKGPASSASAPP) are compositionally biased toward low complexity. Disordered regions lie at residues 232–252 (RAGA…PPAL) and 269–303 (TAPP…DAGG). Over residues 279–303 (AGAGASGQGGGIEIDWGDSGGDAGG) the composition is skewed to gly residues. Short sequence motifs (shuffled ATG8-binding motif) lie at residues 311-314 (IDWD), 334-337 (INWD), and 369-372 (IDWD). Residues 386-401 (NNRAGDVAEGEAAASL) are compositionally biased toward low complexity. The interval 386-416 (NNRAGDVAEGEAAASLSGGGGGGASSGDPDD) is disordered.

The protein belongs to the CDK5RAP3 family. In terms of assembly, substrate adapter component of the UFM1 ribosome E3 ligase (UREL) complex. Interacts with ATG8 family proteins.

Substrate adapter of E3 ligase complexes mediating ufmylation, the covalent attachment of the ubiquitin-like modifier UFM1 to substrate proteins, and which is involved in various processes, such as ribosome recycling and reticulophagy (also called ER-phagy). This is CDK5RAP3 protein homolog from Chlamydomonas reinhardtii (Chlamydomonas smithii).